The primary structure comprises 688 residues: DNA ligase (688 aa).

Residues 51–55 (DSEYD), 100–101 (SL), and glutamate 129 each bind NAD(+). Lysine 131 (N6-AMP-lysine intermediate) is an active-site residue. NAD(+) contacts are provided by arginine 152, glutamate 189, lysine 308, and lysine 332. 4 residues coordinate Zn(2+): cysteine 426, cysteine 429, cysteine 444, and cysteine 450. The BRCT domain occupies 609-688 (ADEQPLKGQT…DELLALLANS (80 aa)).

The protein belongs to the NAD-dependent DNA ligase family. LigA subfamily. The cofactor is Mg(2+). Requires Mn(2+) as cofactor.

The enzyme catalyses NAD(+) + (deoxyribonucleotide)n-3'-hydroxyl + 5'-phospho-(deoxyribonucleotide)m = (deoxyribonucleotide)n+m + AMP + beta-nicotinamide D-nucleotide.. Functionally, DNA ligase that catalyzes the formation of phosphodiester linkages between 5'-phosphoryl and 3'-hydroxyl groups in double-stranded DNA using NAD as a coenzyme and as the energy source for the reaction. It is essential for DNA replication and repair of damaged DNA. The chain is DNA ligase from Shewanella sp. (strain MR-7).